Consider the following 264-residue polypeptide: Glutamate 5-kinase (264 aa).

K9 contributes to the ATP binding site. Residues S47, D132, and N144 each contribute to the substrate site. ATP contacts are provided by residues 164–165 (SD) and 206–212 (TGGIVTK).

This sequence belongs to the glutamate 5-kinase family.

Its subcellular location is the cytoplasm. The enzyme catalyses L-glutamate + ATP = L-glutamyl 5-phosphate + ADP. It functions in the pathway amino-acid biosynthesis; L-proline biosynthesis; L-glutamate 5-semialdehyde from L-glutamate: step 1/2. Its function is as follows. Catalyzes the transfer of a phosphate group to glutamate to form L-glutamate 5-phosphate. This chain is Glutamate 5-kinase, found in Helicobacter hepaticus (strain ATCC 51449 / 3B1).